Consider the following 557-residue polypeptide: Dihydroxy-acid dehydratase (557 aa).

Mg(2+) is bound at residue D78. Residue C119 participates in [2Fe-2S] cluster binding. 2 residues coordinate Mg(2+): D120 and K121. Residue K121 is modified to N6-carboxylysine. Residue C194 participates in [2Fe-2S] cluster binding. E446 contacts Mg(2+). S472 acts as the Proton acceptor in catalysis.

The protein belongs to the IlvD/Edd family. Homodimer. It depends on [2Fe-2S] cluster as a cofactor. Mg(2+) serves as cofactor.

It catalyses the reaction (2R)-2,3-dihydroxy-3-methylbutanoate = 3-methyl-2-oxobutanoate + H2O. The enzyme catalyses (2R,3R)-2,3-dihydroxy-3-methylpentanoate = (S)-3-methyl-2-oxopentanoate + H2O. It participates in amino-acid biosynthesis; L-isoleucine biosynthesis; L-isoleucine from 2-oxobutanoate: step 3/4. Its pathway is amino-acid biosynthesis; L-valine biosynthesis; L-valine from pyruvate: step 3/4. Functionally, functions in the biosynthesis of branched-chain amino acids. Catalyzes the dehydration of (2R,3R)-2,3-dihydroxy-3-methylpentanoate (2,3-dihydroxy-3-methylvalerate) into 2-oxo-3-methylpentanoate (2-oxo-3-methylvalerate) and of (2R)-2,3-dihydroxy-3-methylbutanoate (2,3-dihydroxyisovalerate) into 2-oxo-3-methylbutanoate (2-oxoisovalerate), the penultimate precursor to L-isoleucine and L-valine, respectively. This Desulfosudis oleivorans (strain DSM 6200 / JCM 39069 / Hxd3) (Desulfococcus oleovorans) protein is Dihydroxy-acid dehydratase.